A 103-amino-acid chain; its full sequence is Large ribosomal subunit protein uL24 (103 aa).

It belongs to the universal ribosomal protein uL24 family. As to quaternary structure, part of the 50S ribosomal subunit.

One of two assembly initiator proteins, it binds directly to the 5'-end of the 23S rRNA, where it nucleates assembly of the 50S subunit. In terms of biological role, one of the proteins that surrounds the polypeptide exit tunnel on the outside of the subunit. In Haemophilus influenzae (strain PittEE), this protein is Large ribosomal subunit protein uL24.